The sequence spans 366 residues: Inhibin alpha chain (366 aa).

The first 20 residues, Met-1–Ser-20, serve as a signal peptide directing secretion. The propeptide occupies Cys-21–Arg-63. Residues His-64–Arg-233 constitute a propeptide, inhibin alpha N-terminal region. Asn-147 and Asn-269 each carry an N-linked (GlcNAc...) asparagine glycan. 3 cysteine pairs are disulfide-bonded: Cys-263–Cys-328, Cys-292–Cys-363, and Cys-296–Cys-365.

The protein belongs to the TGF-beta family. In terms of assembly, dimeric, linked by one or more disulfide bonds. Activin B is a dimer of alpha and beta-B. Inhibin A is a dimer of alpha and beta-A. Inhibin B is a dimer of alpha and beta-B. Interacts with TGFBR3L; this interaction regulates female fertility. Proteolytic processing yields a number of bioactive forms, consisting either solely of the mature alpha chain, of the most N-terminal propeptide linked through a disulfide bond to the mature alpha chain, or of the entire proprotein.

The protein resides in the secreted. Inhibins and activins inhibit and activate, respectively, the secretion of follitropin by the pituitary gland. Inhibins/activins are involved in regulating a number of diverse functions such as hypothalamic and pituitary hormone secretion, gonadal hormone secretion, germ cell development and maturation, erythroid differentiation, insulin secretion, nerve cell survival, embryonic axial development or bone growth, depending on their subunit composition. Inhibins appear to oppose the functions of activins. Its function is as follows. Inhibin A is a dimer of alpha/INHA and beta-A/INHBA that functions as a feedback regulator in the hypothalamic-pituitary-gonadal (HPG) axis. Inhibits the secretion of FSH from the anterior pituitary gland by acting on pituitary gonadotrope cells. Antagonizes activin A by binding to the proteoglycan, betaglycan, and forming a stable complex with and, thereby, sequestering type II activin receptors while excluding type I receptor. Functionally, inhibin B is a dimer of alpha and beta-B that plays a crucial role in the regulation of the reproductive system by inhibiting the secretion of follicle-stimulating hormone (FSH) from the anterior pituitary gland. Thereby, maintains reproductive homeostasis in both males and females. Acts as a more potent suppressor of FSH release than inhibin A. Functions as competitive receptor antagonist binding activin type II receptors with high affinity in the presence of the TGF-beta type III coreceptor/TGFBR3L. This Mus musculus (Mouse) protein is Inhibin alpha chain (Inha).